A 126-amino-acid polypeptide reads, in one-letter code: Histone H2B type 1-B (126 aa).

The span at 1 to 12 shows a compositional bias: low complexity; that stretch reads MPEPSKSAPAPK. The interval 1–36 is disordered; sequence MPEPSKSAPAPKKGSKKAISKAQKKDGKKRKRSRKE. An N-acetylproline modification is found at proline 2. Glutamate 3 is modified (ADP-ribosyl glutamic acid). N6-(2-hydroxyisobutyryl)lysine; alternate is present on lysine 6. Residue lysine 6 is modified to N6-(beta-hydroxybutyryl)lysine; alternate. An N6-acetyllysine; alternate modification is found at lysine 6. Residue lysine 6 is modified to N6-butyryllysine; alternate. Residue lysine 6 is modified to N6-crotonyllysine; alternate. At lysine 6 the chain carries N6-lactoyllysine; alternate. A Glycyl lysine isopeptide (Lys-Gly) (interchain with G-Cter in SUMO2); alternate cross-link involves residue lysine 6. Serine 7 is modified (ADP-ribosylserine). Residue lysine 12 is modified to N6-(beta-hydroxybutyryl)lysine; alternate. 2 positions are modified to N6-acetyllysine; alternate: lysine 12 and lysine 13. N6-crotonyllysine; alternate is present on residues lysine 12 and lysine 13. Lysine 12 bears the N6-lactoyllysine; alternate mark. Lysine 13 is subject to N6-(2-hydroxyisobutyryl)lysine; alternate. At serine 15 the chain carries Phosphoserine; by STK4/MST1. 4 positions are modified to N6-acetyllysine; alternate: lysine 16, lysine 17, lysine 21, and lysine 24. Lysine 16, lysine 17, lysine 21, and lysine 24 each carry N6-crotonyllysine; alternate. 4 positions are modified to N6-lactoyllysine; alternate: lysine 16, lysine 17, lysine 21, and lysine 24. Residue lysine 17 is modified to N6-glutaryllysine; alternate. Residues lysine 21 and lysine 24 each carry the N6-(2-hydroxyisobutyryl)lysine; alternate modification. Position 21 is an N6-(beta-hydroxybutyryl)lysine; alternate (lysine 21). Lysine 21 is subject to N6-butyryllysine; alternate. Residue lysine 21 forms a Glycyl lysine isopeptide (Lys-Gly) (interchain with G-Cter in SUMO2); alternate linkage. At lysine 25 the chain carries N6-(2-hydroxyisobutyryl)lysine. Residue lysine 35 is modified to N6-(2-hydroxyisobutyryl)lysine; alternate. Lysine 35 carries the N6-(beta-hydroxybutyryl)lysine; alternate modification. Lysine 35 is subject to N6-crotonyllysine; alternate. Lysine 35 carries the post-translational modification N6-glutaryllysine; alternate. The residue at position 35 (lysine 35) is an N6-succinyllysine; alternate. Lysine 35 is covalently cross-linked (Glycyl lysine isopeptide (Lys-Gly) (interchain with G-Cter in ubiquitin); alternate). Glutamate 36 carries the polyADP-ribosyl glutamic acid modification. Serine 37 bears the Phosphoserine; by AMPK mark. N6-(2-hydroxyisobutyryl)lysine; alternate is present on residues lysine 44, lysine 47, and lysine 58. Lysine 44 is modified (N6-lactoyllysine; alternate). Residues lysine 44 and lysine 47 each carry the N6-glutaryllysine; alternate modification. At lysine 47 the chain carries N6-methyllysine; alternate. At lysine 58 the chain carries N6,N6-dimethyllysine; alternate. The residue at position 80 (arginine 80) is a Dimethylated arginine. Residue lysine 86 is modified to N6-(2-hydroxyisobutyryl)lysine; alternate. An N6-acetyllysine; alternate modification is found at lysine 86. Residue lysine 86 is modified to N6-lactoyllysine; alternate. Lysine 86 is subject to N6,N6,N6-trimethyllysine; alternate. An omega-N-methylarginine mark is found at arginine 87 and arginine 93. Lysine 109 carries the post-translational modification N6-(2-hydroxyisobutyryl)lysine; alternate. Lysine 109 is modified (N6-(beta-hydroxybutyryl)lysine; alternate). The residue at position 109 (lysine 109) is an N6-lactoyllysine; alternate. Position 109 is an N6-glutaryllysine; alternate (lysine 109). Lysine 109 is subject to N6-methyllysine; alternate. Serine 113 carries O-linked (GlcNAc) serine glycosylation. Threonine 116 carries the post-translational modification Phosphothreonine. N6-(2-hydroxyisobutyryl)lysine; alternate is present on residues lysine 117 and lysine 121. The residue at position 117 (lysine 117) is an N6-(beta-hydroxybutyryl)lysine; alternate. N6-lactoyllysine; alternate occurs at positions 117 and 121. 2 positions are modified to N6-glutaryllysine; alternate: lysine 117 and lysine 121. Residues lysine 117 and lysine 121 each carry the N6-succinyllysine; alternate modification. Lysine 117 is modified (N6-methylated lysine; alternate). Lysine 121 is covalently cross-linked (Glycyl lysine isopeptide (Lys-Gly) (interchain with G-Cter in ubiquitin); alternate).

Belongs to the histone H2B family. As to quaternary structure, the nucleosome is a histone octamer containing two molecules each of H2A, H2B, H3 and H4 assembled in one H3-H4 heterotetramer and two H2A-H2B heterodimers. The octamer wraps approximately 147 bp of DNA. In terms of processing, monoubiquitination at Lys-35 (H2BK34Ub) by the MSL1/MSL2 dimer is required for histone H3 'Lys-4' (H3K4me) and 'Lys-79' (H3K79me) methylation and transcription activation at specific gene loci, such as HOXA9 and MEIS1 loci. Similarly, monoubiquitination at Lys-121 (H2BK120Ub) by the RNF20/40 complex gives a specific tag for epigenetic transcriptional activation and is also prerequisite for histone H3 'Lys-4' and 'Lys-79' methylation. It also functions cooperatively with the FACT dimer to stimulate elongation by RNA polymerase II. H2BK120Ub also acts as a regulator of mRNA splicing: deubiquitination by USP49 is required for efficient cotranscriptional splicing of a large set of exons. Post-translationally, phosphorylated on Ser-15 (H2BS14ph) by STK4/MST1 during apoptosis; which facilitates apoptotic chromatin condensation. Also phosphorylated on Ser-15 in response to DNA double strand breaks (DSBs), and in correlation with somatic hypermutation and immunoglobulin class-switch recombination. Phosphorylation at Ser-37 (H2BS36ph) by AMPK in response to stress promotes transcription. GlcNAcylation at Ser-113 promotes monoubiquitination of Lys-121. It fluctuates in response to extracellular glucose, and associates with transcribed genes. In terms of processing, ADP-ribosylated by PARP1 or PARP2 on Ser-7 (H2BS6ADPr) in response to DNA damage. H2BS6ADPr promotes recruitment of CHD1L. Mono-ADP-ribosylated on Glu-3 (H2BE2ADPr) by PARP3 in response to single-strand breaks. Poly ADP-ribosylation on Glu-36 (H2BE35ADPr) by PARP1 regulates adipogenesis: it inhibits phosphorylation at Ser-37 (H2BS36ph), thereby blocking expression of pro-adipogenetic genes. Post-translationally, hydroxybutyrylation of histones is induced by starvation. Crotonylation (Kcr) is specifically present in male germ cells and marks testis-specific genes in post-meiotic cells, including X-linked genes that escape sex chromosome inactivation in haploid cells. Crotonylation marks active promoters and enhancers and confers resistance to transcriptional repressors. It is also associated with post-meiotically activated genes on autosomes. In terms of processing, lactylated in macrophages by EP300/P300 by using lactoyl-CoA directly derived from endogenous or exogenous lactate, leading to stimulates gene transcription.

It localises to the nucleus. The protein localises to the chromosome. Core component of nucleosome. Nucleosomes wrap and compact DNA into chromatin, limiting DNA accessibility to the cellular machineries which require DNA as a template. Histones thereby play a central role in transcription regulation, DNA repair, DNA replication and chromosomal stability. DNA accessibility is regulated via a complex set of post-translational modifications of histones, also called histone code, and nucleosome remodeling. The chain is Histone H2B type 1-B from Mus musculus (Mouse).